The following is a 1026-amino-acid chain: Beta-galactosidase (1026 aa).

Residue E458 is the Proton donor of the active site. E546 functions as the Nucleophile in the catalytic mechanism.

This sequence belongs to the glycosyl hydrolase 2 family.

It catalyses the reaction Hydrolysis of terminal non-reducing beta-D-galactose residues in beta-D-galactosides.. The protein is Beta-galactosidase (lacZ) of Streptococcus thermophilus.